Reading from the N-terminus, the 195-residue chain is Obelin (195 aa).

Positions 1–6 (MSSKYA) are excised as a propeptide. 4 consecutive EF-hand domains span residues 17–52 (RWIK…DICA), 53–88 (KLEA…FPQF), 110–145 (LIRE…SGIS), and 146–181 (PSQE…FWYT). 5 residues coordinate Ca(2+): Asp-30, Asn-32, Asn-34, Lys-36, and Glu-41. Residues Asp-123, Asp-125, Ser-127, Thr-129, Glu-134, Asp-159, Asp-161, Ser-163, Asp-165, and Glu-170 each contribute to the Ca(2+) site.

Belongs to the aequorin family.

Its function is as follows. Ca(2+)-dependent bioluminescence photoprotein. Displays an emission peak at 470 nm (blue light). Trace amounts of calcium ion trigger the intramolecular oxidation of the chromophore, coelenterazine into coelenteramide and CO(2) with the concomitant emission of light. The polypeptide is Obelin (Obelia longissima (Black sea hydrozoan)).